Here is a 209-residue protein sequence, read N- to C-terminus: ATP phosphoribosyltransferase (209 aa).

It belongs to the ATP phosphoribosyltransferase family. Short subfamily. In terms of assembly, heteromultimer composed of HisG and HisZ subunits.

It localises to the cytoplasm. It catalyses the reaction 1-(5-phospho-beta-D-ribosyl)-ATP + diphosphate = 5-phospho-alpha-D-ribose 1-diphosphate + ATP. The protein operates within amino-acid biosynthesis; L-histidine biosynthesis; L-histidine from 5-phospho-alpha-D-ribose 1-diphosphate: step 1/9. In terms of biological role, catalyzes the condensation of ATP and 5-phosphoribose 1-diphosphate to form N'-(5'-phosphoribosyl)-ATP (PR-ATP). Has a crucial role in the pathway because the rate of histidine biosynthesis seems to be controlled primarily by regulation of HisG enzymatic activity. The protein is ATP phosphoribosyltransferase of Alkaliphilus metalliredigens (strain QYMF).